We begin with the raw amino-acid sequence, 911 residues long: Facilitated trehalose transporter Tret1 (911 aa).

The segment at 1–256 (MSGRDNRGAG…RIGFQQQKAT (256 aa)) is disordered. The Cytoplasmic segment spans residues 1-446 (MSGRDNRGAG…VYRPTTNPIY (446 aa)). Gly residues predominate over residues 8–19 (GAGGGGGGGGGG). A compositionally biased stretch (basic and acidic residues) spans 32–50 (KLKEKLTRAGEELGYHRVE). Composition is skewed to low complexity over residues 51–64 (SNLS…SLDT), 76–129 (AAPQ…QQLR), and 156–166 (QQIHVQQQQQQ). Phosphoserine occurs at positions 302, 303, and 304. The disordered stretch occupies residues 334-355 (VLQGSSTDSDEEGDDAEHKRLI). Phosphoserine occurs at positions 374 and 376. Residues 380 to 402 (FLTSRQNFQQQRSISTDSRKSRR) form a disordered region. The span at 384–395 (RQNFQQQRSIST) shows a compositional bias: polar residues. The helical transmembrane segment at 447-467 (IWTQVLAALSVSLGSLVVGFA) threads the bilayer. Residues 468-494 (SAYTSPALVSMTNTNLTSFVVTPQAAS) are Extracellular-facing. Asn482 carries an N-linked (GlcNAc...) asparagine glycan. A helical membrane pass occupies residues 495 to 515 (WVGGIMPLAGLAGGIAGGPFI). The Cytoplasmic portion of the chain corresponds to 516 to 527 (EYLGRRNTILAT). The helical transmembrane segment at 528–548 (AVPFIVSWLLIACAVNVIMVL) threads the bilayer. Residues 549-551 (CGR) are Extracellular-facing. A helical transmembrane segment spans residues 552–572 (FLAGFCVGIASLSLPVYLGET). At 573 to 578 (VQPEVR) the chain is on the cytoplasmic side. The helical transmembrane segment at 579–599 (GTLGLLPTAFGNIGILLCFVA) threads the bilayer. Topologically, residues 600–606 (GTYMDWS) are extracellular. The chain crosses the membrane as a helical span at residues 607-627 (MLAFLGASLPVPFLILMFLIP). Over 628-690 (ETPRWYVSRG…ELLKRSNLKP (63 aa)) the chain is Cytoplasmic. A helical membrane pass occupies residues 691-711 (LSISLGLMFFQQLSGINAVIF). The Extracellular segment spans residues 712–727 (YTVQIFQDAGSTIDGN). A helical transmembrane segment spans residues 728–748 (VCTIIVGVVNFAATFIATILI). Topologically, residues 749–754 (DRAGRK) are cytoplasmic. Residues 755–775 (VLLYVSNVMMVLTLFVLGGFF) traverse the membrane as a helical segment. Over 776 to 794 (YCKSSGMDTSNVGWLPLSC) the chain is Extracellular. A helical transmembrane segment spans residues 795 to 815 (FVIYILGFSLGFGPIPWLMMG). The Cytoplasmic segment spans residues 816–821 (EILPAK). A helical transmembrane segment spans residues 822–842 (IRGSAASVATAFNWSCTFVVT). Residues 843 to 855 (KSFQDMIDFMGAH) lie on the Extracellular side of the membrane. A helical membrane pass occupies residues 856–876 (GAFWMFGAICFIGLFFVIFYV). The Cytoplasmic portion of the chain corresponds to 877–911 (PETQGKTLEDIERKMMGRVRRMSSVANIKPLSFNM). Phosphoserine occurs at positions 899 and 900.

This sequence belongs to the major facilitator superfamily. Sugar transporter (TC 2.A.1.1) family. Trehalose transporter subfamily.

Its subcellular location is the cell membrane. Functionally, low-capacity facilitative transporter for trehalose. Does not transport maltose, sucrose or lactose. Mediates the bidirectional transfer of trehalose. Responsible for the transport of trehalose synthesized in the fat body and the incorporation of trehalose into other tissues that require a carbon source, thereby regulating trehalose levels in the hemolymph. The chain is Facilitated trehalose transporter Tret1 from Drosophila virilis (Fruit fly).